A 670-amino-acid polypeptide reads, in one-letter code: DNA ligase (670 aa).

NAD(+) contacts are provided by residues 32 to 36 (DAEYD), 81 to 82 (SL), and glutamate 111. Lysine 113 (N6-AMP-lysine intermediate) is an active-site residue. Residues arginine 134, glutamate 171, lysine 290, and lysine 314 each coordinate NAD(+). Residues cysteine 408, cysteine 411, cysteine 426, and cysteine 432 each coordinate Zn(2+). Residues 591–670 (EEALSLKGQT…DGLLAVLAGE (80 aa)) form the BRCT domain.

Belongs to the NAD-dependent DNA ligase family. LigA subfamily. Requires Mg(2+) as cofactor. It depends on Mn(2+) as a cofactor.

It catalyses the reaction NAD(+) + (deoxyribonucleotide)n-3'-hydroxyl + 5'-phospho-(deoxyribonucleotide)m = (deoxyribonucleotide)n+m + AMP + beta-nicotinamide D-nucleotide.. DNA ligase that catalyzes the formation of phosphodiester linkages between 5'-phosphoryl and 3'-hydroxyl groups in double-stranded DNA using NAD as a coenzyme and as the energy source for the reaction. It is essential for DNA replication and repair of damaged DNA. This is DNA ligase from Shewanella sediminis (strain HAW-EB3).